We begin with the raw amino-acid sequence, 132 residues long: DNA-directed RNA polymerase subunit omega (132 aa).

Positions 76–105 (EVDEPEQDAASIAEGQLTSGSQDEDEMPET) are disordered.

The protein belongs to the RNA polymerase subunit omega family. In terms of assembly, the RNAP catalytic core consists of 2 alpha, 1 beta, 1 beta' and 1 omega subunit. When a sigma factor is associated with the core the holoenzyme is formed, which can initiate transcription.

The enzyme catalyses RNA(n) + a ribonucleoside 5'-triphosphate = RNA(n+1) + diphosphate. Its function is as follows. Promotes RNA polymerase assembly. Latches the N- and C-terminal regions of the beta' subunit thereby facilitating its interaction with the beta and alpha subunits. The polypeptide is DNA-directed RNA polymerase subunit omega (Allorhizobium ampelinum (strain ATCC BAA-846 / DSM 112012 / S4) (Agrobacterium vitis (strain S4))).